The sequence spans 98 residues: NADH-ubiquinone oxidoreductase chain 4L (98 aa).

Transmembrane regions (helical) follow at residues threonine 2 to phenylalanine 22, leucine 26 to threonine 46, and isoleucine 59 to valine 79.

It belongs to the complex I subunit 4L family. As to quaternary structure, core subunit of respiratory chain NADH dehydrogenase (Complex I) which is composed of 45 different subunits.

The protein localises to the mitochondrion inner membrane. The enzyme catalyses a ubiquinone + NADH + 5 H(+)(in) = a ubiquinol + NAD(+) + 4 H(+)(out). In terms of biological role, core subunit of the mitochondrial membrane respiratory chain NADH dehydrogenase (Complex I) which catalyzes electron transfer from NADH through the respiratory chain, using ubiquinone as an electron acceptor. Part of the enzyme membrane arm which is embedded in the lipid bilayer and involved in proton translocation. The protein is NADH-ubiquinone oxidoreductase chain 4L of Rattus norvegicus (Rat).